Reading from the N-terminus, the 333-residue chain is Glycerol-3-phosphate dehydrogenase [NAD(P)+] (333 aa).

Residues W16, R36, and K109 each coordinate NADPH. The sn-glycerol 3-phosphate site is built by K109, G137, and S139. An NADPH-binding site is contributed by A141. The sn-glycerol 3-phosphate site is built by K192, D245, S255, R256, and N257. The active-site Proton acceptor is the K192. R256 is an NADPH binding site. Positions 280 and 282 each coordinate NADPH.

This sequence belongs to the NAD-dependent glycerol-3-phosphate dehydrogenase family.

It localises to the cytoplasm. It carries out the reaction sn-glycerol 3-phosphate + NAD(+) = dihydroxyacetone phosphate + NADH + H(+). The catalysed reaction is sn-glycerol 3-phosphate + NADP(+) = dihydroxyacetone phosphate + NADPH + H(+). It functions in the pathway membrane lipid metabolism; glycerophospholipid metabolism. Its function is as follows. Catalyzes the reduction of the glycolytic intermediate dihydroxyacetone phosphate (DHAP) to sn-glycerol 3-phosphate (G3P), the key precursor for phospholipid synthesis. The polypeptide is Glycerol-3-phosphate dehydrogenase [NAD(P)+] (Parvibaculum lavamentivorans (strain DS-1 / DSM 13023 / NCIMB 13966)).